A 107-amino-acid polypeptide reads, in one-letter code: L-amino-acid oxidase (107 aa).

Residue 35-38 (GPMR) coordinates FAD. Substrate contacts are provided by R38 and H49.

The protein belongs to the flavin monoamine oxidase family. FIG1 subfamily. As to quaternary structure, homodimer; non-covalently linked. It depends on FAD as a cofactor. In terms of processing, N-glycosylated. In terms of tissue distribution, expressed by the venom gland.

Its subcellular location is the secreted. It carries out the reaction an L-alpha-amino acid + O2 + H2O = a 2-oxocarboxylate + H2O2 + NH4(+). The enzyme catalyses L-leucine + O2 + H2O = 4-methyl-2-oxopentanoate + H2O2 + NH4(+). The catalysed reaction is L-phenylalanine + O2 + H2O = 3-phenylpyruvate + H2O2 + NH4(+). It catalyses the reaction L-tryptophan + O2 + H2O = indole-3-pyruvate + H2O2 + NH4(+). It carries out the reaction L-methionine + O2 + H2O = 4-methylsulfanyl-2-oxobutanoate + H2O2 + NH4(+). The enzyme catalyses L-isoleucine + O2 + H2O = (S)-3-methyl-2-oxopentanoate + H2O2 + NH4(+). The catalysed reaction is L-arginine + O2 + H2O = 5-guanidino-2-oxopentanoate + H2O2 + NH4(+). It catalyses the reaction L-histidine + O2 + H2O = 3-(imidazol-5-yl)pyruvate + H2O2 + NH4(+). Its function is as follows. Catalyzes an oxidative deamination of predominantly hydrophobic and aromatic L-amino acids, thus producing hydrogen peroxide that may contribute to the diverse toxic effects of this enzyme. Shows high activity on L-Met, moderate activity on L-Trp, L-Leu, L-His, L-Phe, L-Arg, L-Ile, low activity on L-Val, L-Glu, L-Lys, L-Gln, L-Asn, L-Tyr, L-Ala, and no activity on L-Asp, L-Ser, L-Pro, L-Gly, L-Thr and L-Cys. Shows antimicrobial activity inhibiting the growth of both Gram-negative and Gram-positive bacteria. Also inhibits platelet aggregation induced by ADP or collagen. Effects of snake L-amino oxidases on platelets are controversial, since they either induce aggregation or inhibit agonist-induced aggregation. These different effects are probably due to different experimental conditions. This protein may also induce hemorrhage, hemolysis, edema, apoptosis, and have antiparasitic activities. The protein is L-amino-acid oxidase of Macrovipera lebetinus (Levantine viper).